Reading from the N-terminus, the 236-residue chain is MPQRLYTYPPLLRGRLLQRYKRFFADIELDSGETITAHCPNTGPMTGVCQMGNLVYVSKSDNPKRKLAYTWELIEVTDNEPTWVGVNTGLPNRVVQALLEQRCLPVLGDYGEVQREVPYGENSRIDFRLTGDRPIYVEVKNTTWTAGRLALFPDTVTTRGQKHLRELTAILLEARAVMLYFINRGDCTAFAPGDSADPTYGQLLRTGIAAGLEVYPCQFQISPEGIDFLGVAPLQL.

Belongs to the SfsA family.

The chain is Sugar fermentation stimulation protein homolog from Synechococcus elongatus (strain ATCC 33912 / PCC 7942 / FACHB-805) (Anacystis nidulans R2).